The sequence spans 334 residues: Cysteine and histidine-rich domain-containing protein 1 (334 aa).

Zn(2+) is bound by residues Cys-5, Cys-10, Cys-24, His-27, Cys-42, Cys-43, Cys-59, His-64, Cys-156, Cys-161, Cys-175, His-178, Cys-193, Cys-194, Cys-210, and His-215. CHORD domains are found at residues 5–64 (CYNR…KGQH) and 156–215 (CKNG…KGTH). Positions 226–315 (VVPCRHDWHQ…AEFMTWARLE (90 aa)) constitute a CS domain.

Functionally, regulates centrosome duplication. The polypeptide is Cysteine and histidine-rich domain-containing protein 1 (chordc1) (Xenopus laevis (African clawed frog)).